The sequence spans 398 residues: Phosphoglycerate kinase (398 aa).

Substrate contacts are provided by residues 21–23 (DIN), Arg-36, 59–62 (HFGR), Arg-118, and Arg-151. Residues Lys-201, Glu-323, and 353 to 356 (GGDT) contribute to the ATP site.

Belongs to the phosphoglycerate kinase family. As to quaternary structure, monomer.

Its subcellular location is the cytoplasm. It catalyses the reaction (2R)-3-phosphoglycerate + ATP = (2R)-3-phospho-glyceroyl phosphate + ADP. The protein operates within carbohydrate degradation; glycolysis; pyruvate from D-glyceraldehyde 3-phosphate: step 2/5. In Ruegeria pomeroyi (strain ATCC 700808 / DSM 15171 / DSS-3) (Silicibacter pomeroyi), this protein is Phosphoglycerate kinase.